A 249-amino-acid polypeptide reads, in one-letter code: Protein-lysine 6-oxidase (249 aa).

Sulfotyrosine is present on Tyr19. The interval 45–249 is lysyl-oxidase like; it reads PDLVPDPYYI…YASGCTISPY (205 aa). 5 disulfide bridges follow: Cys70–Cys76, Cys123–Cys172, Cys156–Cys162, Cys183–Cys193, and Cys230–Cys244. Cu cation contacts are provided by His124, His126, and His128. Residues 152–187 constitute a cross-link (lysine tyrosylquinone (Lys-Tyr)); it reads KASFCLEDTSCDYGYHRRFACTAHTQGLSPGCYDTY. A 2',4',5'-topaquinone modification is found at Tyr187.

Belongs to the lysyl oxidase family. As to quaternary structure, interacts with MFAP4. Interacts (via propeptide) with EFEMP2; this interaction is strong and facilitates formation of ternary complexes with ELN during elastic fiber assembly; this interaction limits interaction of EFEMP2 with FBLN5. It depends on Cu cation as a cofactor. The cofactor is lysine tyrosylquinone residue. Post-translationally, the lysine tyrosylquinone cross-link (LTQ) is generated by condensation of the epsilon-amino group of a lysine with a topaquinone produced by oxidation of tyrosine. Proteolytically cleaved by BMP1 which removes the propeptide. Also proteolytically cleaved by ADAMTS2 and ADAMTS14, but not by ADAMTS3, at an additional cleavage site downstream of the BMP1 cleavage site. The propeptide plays a role in directing the deposition of this enzyme to elastic fibers, via interaction with tropoelastin. Cleavage by BMP1 to remove the propeptide does not increase enzymatic activity but increases binding to collagen. Cleavage by ADAMTS2 produces a form with reduced collagen-binding activity. In terms of processing, sulfated at Tyr-19 and also at either Tyr-15 or Tyr-16 which enhances binding to collagen.

Its subcellular location is the secreted. The protein resides in the extracellular space. The enzyme catalyses L-lysyl-[protein] + O2 + H2O = (S)-2-amino-6-oxohexanoyl-[protein] + H2O2 + NH4(+). In terms of biological role, responsible for the post-translational oxidative deamination of peptidyl lysine residues in precursors to fibrous collagen and elastin. Regulator of Ras expression. May play a role in tumor suppression. Plays a role in the aortic wall architecture. The protein is Protein-lysine 6-oxidase of Sus scrofa (Pig).